We begin with the raw amino-acid sequence, 219 residues long: UPF0319 protein MS0844 (219 aa).

Positions 1–21 (MKFRLTALAVAALLTSTASFA) are cleaved as a signal peptide.

Belongs to the UPF0319 family.

In Mannheimia succiniciproducens (strain KCTC 0769BP / MBEL55E), this protein is UPF0319 protein MS0844.